We begin with the raw amino-acid sequence, 235 residues long: 2-C-methyl-D-erythritol 4-phosphate cytidylyltransferase (235 aa).

This sequence belongs to the IspD/TarI cytidylyltransferase family. IspD subfamily.

The enzyme catalyses 2-C-methyl-D-erythritol 4-phosphate + CTP + H(+) = 4-CDP-2-C-methyl-D-erythritol + diphosphate. It participates in isoprenoid biosynthesis; isopentenyl diphosphate biosynthesis via DXP pathway; isopentenyl diphosphate from 1-deoxy-D-xylulose 5-phosphate: step 2/6. Its function is as follows. Catalyzes the formation of 4-diphosphocytidyl-2-C-methyl-D-erythritol from CTP and 2-C-methyl-D-erythritol 4-phosphate (MEP). The protein is 2-C-methyl-D-erythritol 4-phosphate cytidylyltransferase of Pseudomonas fluorescens (strain SBW25).